We begin with the raw amino-acid sequence, 359 residues long: tRNA/tmRNA (uracil-C(5))-methyltransferase (359 aa).

The S-adenosyl-L-methionine site is built by Gln-183, Tyr-211, Asn-216, Glu-232, and Asp-292. Cys-317 acts as the Nucleophile in catalysis. Catalysis depends on Glu-351, which acts as the Proton acceptor.

Belongs to the class I-like SAM-binding methyltransferase superfamily. RNA M5U methyltransferase family. TrmA subfamily.

It catalyses the reaction uridine(54) in tRNA + S-adenosyl-L-methionine = 5-methyluridine(54) in tRNA + S-adenosyl-L-homocysteine + H(+). It carries out the reaction uridine(341) in tmRNA + S-adenosyl-L-methionine = 5-methyluridine(341) in tmRNA + S-adenosyl-L-homocysteine + H(+). Dual-specificity methyltransferase that catalyzes the formation of 5-methyluridine at position 54 (m5U54) in all tRNAs, and that of position 341 (m5U341) in tmRNA (transfer-mRNA). In Pseudomonas fluorescens (strain ATCC BAA-477 / NRRL B-23932 / Pf-5), this protein is tRNA/tmRNA (uracil-C(5))-methyltransferase.